A 358-amino-acid chain; its full sequence is Ganglioside-induced differentiation-associated protein 1 (358 aa).

In terms of domain architecture, GST N-terminal spans 24-105 (VKLILYHWTH…YLEQTFLDEK (82 aa)). Glycyl lysine isopeptide (Lys-Gly) (interchain with G-Cter in ubiquitin) cross-links involve residues Lys50, Lys172, Lys173, Lys188, and Lys190. In terms of domain architecture, GST C-terminal spans 153-309 (PAYATTRIRS…LISAVLPTAF (157 aa)). An N6-acetyllysine; alternate modification is found at Lys203. Residue Lys203 forms a Glycyl lysine isopeptide (Lys-Gly) (interchain with G-Cter in ubiquitin); alternate linkage. Glycyl lysine isopeptide (Lys-Gly) (interchain with G-Cter in ubiquitin) cross-links involve residues Lys206, Lys207, and Lys214. The next 2 helical transmembrane spans lie at 292 to 312 (VLGH…FRVA) and 320 to 340 (LGTT…FMLF). The required for mitochondrial localization stretch occupies residues 320 to 358 (LGTTLVVGLLAGMGYFAFMLFRKRLGSMILALRPRPNYF).

Belongs to the GST superfamily. As to quaternary structure, homodimer. Post-translationally, ubiquitinated by PRKN during mitophagy, leading to its degradation and enhancement of mitophagy. Deubiquitinated by USP30.

The protein resides in the mitochondrion outer membrane. Its subcellular location is the cytoplasm. Functionally, regulates the mitochondrial network by promoting mitochondrial fission. This chain is Ganglioside-induced differentiation-associated protein 1 (GDAP1), found in Bos taurus (Bovine).